The primary structure comprises 349 residues: Putative F-box/LRR-repeat protein At3g16555 (349 aa).

Residues 1–48 (MVLLPWELEEDILSRLPPRSLVQFRSVCKRWNALFDVKSFNKDQFARA) enclose the F-box domain. The stretch at 267–290 (VVWISLLTLPPNNLPNLFIVCYGI) is one LRR repeat.

The chain is Putative F-box/LRR-repeat protein At3g16555 from Arabidopsis thaliana (Mouse-ear cress).